The primary structure comprises 631 residues: Phosphomethylpyrimidine synthase (631 aa).

Residues Asn-239, Met-268, Tyr-297, His-333, 353-355, 394-397, and Glu-433 contribute to the substrate site; these read SRG and DGLR. Position 437 (His-437) interacts with Zn(2+). Residue Tyr-460 participates in substrate binding. His-501 contacts Zn(2+). Positions 581, 584, and 589 each coordinate [4Fe-4S] cluster.

It belongs to the ThiC family. Homodimer. Requires [4Fe-4S] cluster as cofactor.

It catalyses the reaction 5-amino-1-(5-phospho-beta-D-ribosyl)imidazole + S-adenosyl-L-methionine = 4-amino-2-methyl-5-(phosphooxymethyl)pyrimidine + CO + 5'-deoxyadenosine + formate + L-methionine + 3 H(+). Its pathway is cofactor biosynthesis; thiamine diphosphate biosynthesis. Catalyzes the synthesis of the hydroxymethylpyrimidine phosphate (HMP-P) moiety of thiamine from aminoimidazole ribotide (AIR) in a radical S-adenosyl-L-methionine (SAM)-dependent reaction. This chain is Phosphomethylpyrimidine synthase, found in Escherichia coli O157:H7.